Here is a 178-residue protein sequence, read N- to C-terminus: Cytidylate kinase (178 aa).

7–15 contributes to the ATP binding site; the sequence is GLPGTGTTT.

This sequence belongs to the cytidylate kinase family. Type 2 subfamily.

It localises to the cytoplasm. It carries out the reaction CMP + ATP = CDP + ADP. It catalyses the reaction dCMP + ATP = dCDP + ADP. The polypeptide is Cytidylate kinase (Methanococcus maripaludis (strain DSM 14266 / JCM 13030 / NBRC 101832 / S2 / LL)).